The primary structure comprises 261 residues: Cytochrome c oxidase subunit 3 (261 aa).

Residues 1-15 are Mitochondrial matrix-facing; the sequence is MTHQTHAYHMVNPSP. Residues 16-34 traverse the membrane as a helical segment; the sequence is WPLTGAMSALLLTSGLIMW. The Mitochondrial intermembrane portion of the chain corresponds to 35-40; sequence FHFNSY. Residues 41–66 traverse the membrane as a helical segment; that stretch reads TLLLLGLLTNLISSYQWWRDIVREGT. The Mitochondrial matrix portion of the chain corresponds to 67 to 72; it reads YQGHHT. A helical transmembrane segment spans residues 73–105; sequence KIVQKGLRYGMILFIISEVFFFLGFFWAFYHSS. At 106–128 the chain is on the mitochondrial intermembrane side; it reads LAPTPELGGCWPPTGISPLNPLE. The helical transmembrane segment at 129–152 threads the bilayer; that stretch reads VPLLNTSILLASGVSITWAHHSLM. Residues 153–155 lie on the Mitochondrial matrix side of the membrane; sequence EGN. A helical transmembrane segment spans residues 156 to 183; it reads RKQMLQALTITIALGLYFTALQAMEYYE. Over 184 to 190 the chain is Mitochondrial intermembrane; that stretch reads ASFTISD. Residues 191–223 traverse the membrane as a helical segment; the sequence is GVYGSTFFVATGFHGLHVIIGTTFLITCLVRQT. The Mitochondrial matrix portion of the chain corresponds to 224-232; that stretch reads LYHFTSNHH. The helical transmembrane segment at 233–256 threads the bilayer; that stretch reads FGFEAAAWYWHFVDVVWLFLYVSI. Over 257-261 the chain is Mitochondrial intermembrane; sequence YWWGS.

This sequence belongs to the cytochrome c oxidase subunit 3 family. As to quaternary structure, component of the cytochrome c oxidase (complex IV, CIV), a multisubunit enzyme composed of 14 subunits. The complex is composed of a catalytic core of 3 subunits MT-CO1, MT-CO2 and MT-CO3, encoded in the mitochondrial DNA, and 11 supernumerary subunits COX4I, COX5A, COX5B, COX6A, COX6B, COX6C, COX7A, COX7B, COX7C, COX8 and NDUFA4, which are encoded in the nuclear genome. The complex exists as a monomer or a dimer and forms supercomplexes (SCs) in the inner mitochondrial membrane with NADH-ubiquinone oxidoreductase (complex I, CI) and ubiquinol-cytochrome c oxidoreductase (cytochrome b-c1 complex, complex III, CIII), resulting in different assemblies (supercomplex SCI(1)III(2)IV(1) and megacomplex MCI(2)III(2)IV(2)).

It localises to the mitochondrion inner membrane. The enzyme catalyses 4 Fe(II)-[cytochrome c] + O2 + 8 H(+)(in) = 4 Fe(III)-[cytochrome c] + 2 H2O + 4 H(+)(out). Its function is as follows. Component of the cytochrome c oxidase, the last enzyme in the mitochondrial electron transport chain which drives oxidative phosphorylation. The respiratory chain contains 3 multisubunit complexes succinate dehydrogenase (complex II, CII), ubiquinol-cytochrome c oxidoreductase (cytochrome b-c1 complex, complex III, CIII) and cytochrome c oxidase (complex IV, CIV), that cooperate to transfer electrons derived from NADH and succinate to molecular oxygen, creating an electrochemical gradient over the inner membrane that drives transmembrane transport and the ATP synthase. Cytochrome c oxidase is the component of the respiratory chain that catalyzes the reduction of oxygen to water. Electrons originating from reduced cytochrome c in the intermembrane space (IMS) are transferred via the dinuclear copper A center (CU(A)) of subunit 2 and heme A of subunit 1 to the active site in subunit 1, a binuclear center (BNC) formed by heme A3 and copper B (CU(B)). The BNC reduces molecular oxygen to 2 water molecules using 4 electrons from cytochrome c in the IMS and 4 protons from the mitochondrial matrix. In Ornithorhynchus anatinus (Duckbill platypus), this protein is Cytochrome c oxidase subunit 3 (MT-CO3).